We begin with the raw amino-acid sequence, 190 residues long: CASP-like protein 1E1 (190 aa).

The tract at residues 1–21 (MEHESKTKMDGIEMEKGKKEN) is disordered. The Cytoplasmic portion of the chain corresponds to 1–28 (MEHESKTKMDGIEMEKGKKENGSRKGVE). The helical transmembrane segment at 29-49 (ITMRVLALVLTMVAATVLGVA) threads the bilayer. Residues 50 to 83 (KQTEVVPIKLIPTLPPLNVATTAKASYLSAFVYN) lie on the Extracellular side of the membrane. The helical transmembrane segment at 84–104 (ICANAIACGYTAISIMIVIIS) threads the bilayer. Topologically, residues 105-111 (KGRRSKC) are cytoplasmic. Residues 112 to 132 (LLMAVLIGDLMMVALLCSSTG) traverse the membrane as a helical segment. Over 133–163 (AAGAIGLMGRHGNKHVMWKKVCGVFGKFCNQ) the chain is Extracellular. A helical transmembrane segment spans residues 164–184 (AAVSVAITLIASVVFMLLVVL). Residues 185–190 (DALKLP) lie on the Cytoplasmic side of the membrane.

This sequence belongs to the Casparian strip membrane proteins (CASP) family. As to quaternary structure, homodimer and heterodimers.

It is found in the cell membrane. This chain is CASP-like protein 1E1, found in Arabidopsis lyrata subsp. lyrata (Lyre-leaved rock-cress).